A 450-amino-acid chain; its full sequence is Sensor histidine kinase EnvZ (450 aa).

The Cytoplasmic portion of the chain corresponds to 1–15; sequence MRRMRFSPRSSFART. Residues 16 to 35 form a helical membrane-spanning segment; that stretch reads LLLIVTLLFVSLVTTYLVVL. At 36 to 158 the chain is on the periplasmic side; that stretch reads NFAILPSLQQ…LTEIHQGDFS (123 aa). A helical transmembrane segment spans residues 159–179; it reads PLFRYTLAIMLLAIGGAWLFI. The HAMP domain occupies 180-232; the sequence is RIQNRPLVDLEHAALQVGKGIIPPPLREYGASEVRSVTRAFNHMAAGVKQLAD. Residues 180–450 lie on the Cytoplasmic side of the membrane; sequence RIQNRPLVDL…ARVQGTTKEA (271 aa). The tract at residues 223–289 is cytoplasmic dimerization domain (CDD), when dimerized forms osmosensitive core; it reads MAAGVKQLAD…IIEQFIDYLR (67 aa). The Histidine kinase domain maps to 240–440; sequence GVSHDLRTPL…SIRAWLPVPV (201 aa). ATP contacts are provided by residues H243, 347–351, D373, 392–393, and 402–406; these read NAARY, RG, and TGLGL. A Phosphohistidine; by autocatalysis modification is found at H243.

In terms of assembly, homodimer. Autophosphorylated.

It localises to the cell inner membrane. It carries out the reaction ATP + protein L-histidine = ADP + protein N-phospho-L-histidine.. In terms of biological role, member of the two-component regulatory system EnvZ/OmpR involved in regulating expression of the outer membrane porins OmpC and OmpF as well as other genes. Unlike E.coli or S.typhimurium both porins are expressed constitutively. Involved in regulation of the biosynthesis of Vi polysaccharide, a capsular antigen thought to be involved in the virulence of S.typhi. Vi antigen is synthesized at low NaCl concentrations (under 0.4 M). EnvZ functions as a membrane-associated protein kinase that phosphorylates OmpR in response to environmental signals. The polypeptide is Sensor histidine kinase EnvZ (envZ) (Salmonella typhi).